We begin with the raw amino-acid sequence, 180 residues long: Colicin-E5 (180 aa).

Disordered stretches follow at residues 24–143 (AQTD…GSPG) and 155–180 (VTQI…KNDQ). A compositionally biased stretch (basic and acidic residues) spans 54–76 (ESRKKKEDNKRDAEGKLNDELAK). The segment at 74-180 (LAKNKGKIPG…RIQWGNKNDQ (107 aa)) is nuclease. Positions 106 to 116 (NTVSNGATGTS) are enriched in polar residues. Basic and acidic residues predominate over residues 160 to 171 (DKTDPGWVDDSR).

The protein belongs to the colicin/pyosin nuclease family.

Colicins are polypeptide toxins produced by and active against E.coli and closely related bacteria. This colicin is an endonuclease. The sequence is that of Colicin-E5 (col) from Escherichia coli.